A 254-amino-acid polypeptide reads, in one-letter code: Alcohol dehydrogenase (254 aa).

Residue 10 to 33 (FVAGLGGIGLDTSREIVKSGPKNL) participates in NAD(+) binding. S138 contacts substrate. Y151 (proton acceptor) is an active-site residue.

It belongs to the short-chain dehydrogenases/reductases (SDR) family. As to quaternary structure, homodimer.

It carries out the reaction a primary alcohol + NAD(+) = an aldehyde + NADH + H(+). It catalyses the reaction a secondary alcohol + NAD(+) = a ketone + NADH + H(+). In Drosophila picticornis (Fruit fly), this protein is Alcohol dehydrogenase (Adh).